A 160-amino-acid chain; its full sequence is Cytochrome b6-f complex subunit 4 (160 aa).

3 helical membrane-spanning segments follow: residues 36–56, 95–115, and 131–151; these read LLYL…GLAV, LLGV…PFIE, and LVFI…CLPI.

This sequence belongs to the cytochrome b family. PetD subfamily. As to quaternary structure, the 4 large subunits of the cytochrome b6-f complex are cytochrome b6, subunit IV (17 kDa polypeptide, petD), cytochrome f and the Rieske protein, while the 4 small subunits are petG, petL, petM and petN. The complex functions as a dimer.

Its subcellular location is the plastid. The protein localises to the chloroplast thylakoid membrane. Its function is as follows. Component of the cytochrome b6-f complex, which mediates electron transfer between photosystem II (PSII) and photosystem I (PSI), cyclic electron flow around PSI, and state transitions. In Thalassiosira pseudonana (Marine diatom), this protein is Cytochrome b6-f complex subunit 4.